We begin with the raw amino-acid sequence, 629 residues long: Nicotinic receptor-associated protein 1 (629 aa).

C2 domains are found at residues 1–144 and 162–299; these read MNQP…KAHL and RTGS…ELLL. Asp33, Asp39, Asp108, Asp110, Asp122, Asp192, Asp198, Asp254, Asp256, and Asp274 together coordinate Ca(2+). The region spanning 342–561 is the VWFA domain; the sequence is EFAVAVDFTA…LDPDVVQENL (220 aa). Disordered regions lie at residues 581–600 and 607–629; these read GFQP…PPDY and IGRR…PPMY.

This sequence belongs to the copine family. In terms of assembly, interacts with nicotinic acetylcholine receptor. Ca(2+) is required as a cofactor.

The protein localises to the cell membrane. Exhibits calcium-dependent phospholipid binding properties. May function in membrane trafficking. Regulates synaptic levels of nicotinic acetylcholine receptor subunit lev-1 and unc-38 in the nerve cord. Involved in nicotinic acetylcholine receptor (nAChR)-mediated sensitivity to nicotine and levamisole. Affects directional sperm motility. This chain is Nicotinic receptor-associated protein 1, found in Caenorhabditis briggsae.